We begin with the raw amino-acid sequence, 1063 residues long: Lysine-specific demethylase phf2 (1063 aa).

A PHD-type zinc finger spans residues 5–56 (PVYCICRLPYDVTQFMIECDACKDWFHGSCVGVDEDEAPDIDIYHCPNCEKT). The region spanning 197-353 (FSDARMANIV…MQMRAYEVEK (157 aa)) is the JmjC domain. Threonine 246 contributes to the 2-oxoglutarate binding site. The Fe cation site is built by histidine 249 and glutamate 251. 2-oxoglutarate contacts are provided by tyrosine 259 and lysine 266. Residue asparagine 321 participates in Fe cation binding. 4 disordered regions span residues 448–546 (VSDS…LAAL), 704–761 (NIKE…SAGI), 773–864 (GIDY…DMFD), and 879–1045 (YVYP…MATA). Residues 460–477 (SEPSNSKPPAEEPPSALS) are compositionally biased toward low complexity. Composition is skewed to basic and acidic residues over residues 513-540 (PPKE…EKKP) and 723-745 (KSPD…DVKG). Residues 746-755 (RNSKVSKKKG) show a composition bias toward basic residues. Positions 776-791 (YSNNSQPPASPSTQEA) are enriched in polar residues. The span at 813 to 833 (SNSQAKNNSHSSAASKKPSGA) shows a compositional bias: low complexity. Basic residues predominate over residues 842–852 (RPAKRLPKKTQ). Positions 920–929 (RQERPAREGA) are enriched in basic and acidic residues. Over residues 953–964 (IKKKKKSAKKKP) the composition is skewed to basic residues. Basic and acidic residues predominate over residues 965–975 (IVAEESHKLSH). Composition is skewed to low complexity over residues 976–988 (DSSS…DSES) and 1021–1031 (SSSSSSQNASS). Serine 1021 carries the post-translational modification Phosphoserine; by PKA.

The protein belongs to the JHDM1 histone demethylase family. JHDM1D subfamily.

The protein localises to the nucleus. It is found in the nucleolus. It localises to the chromosome. Its subcellular location is the centromere. The protein resides in the kinetochore. Lysine demethylase that demethylates both histones and non-histone proteins. Mediates demethylation of dimethylated 'Lys-9' of histone H3 (H3K9me2). Recruited to trimethylated 'Lys-4' of histone H3 (H3K4me3) at rDNA promoters and promotes expression of rDNA. This chain is Lysine-specific demethylase phf2 (phf2), found in Danio rerio (Zebrafish).